Reading from the N-terminus, the 319-residue chain is uncharacterized protein (319 aa).

This is an uncharacterized protein from Ictalurid herpesvirus 1 (strain Auburn) (IcHV-1).